We begin with the raw amino-acid sequence, 1371 residues long: Soluble scavenger receptor cysteine-rich domain-containing protein SSC5D (1371 aa).

A signal peptide spans 1 to 16; sequence MRGLACLLAMLVGIQA. The region spanning 20 to 120 is the SRCR 1 domain; it reads LRLADGPHGC…HEEDAGVVCV (101 aa). 3 disulfide bridges follow: Cys-45/Cys-109, Cys-58/Cys-119, and Cys-89/Cys-99. Residues 143–154 show a composition bias toward low complexity; sequence LSGELSPSSEEP. The tract at residues 143 to 200 is disordered; the sequence is LSGELSPSSEEPPITHAPQPAASSQNGPRKKNPRPPKQTKSTRAPVLTNGAPHQERLR. SRCR domains lie at 199-299 and 305-405; these read LRLV…LVCT and IRLA…AVCD. 6 disulfide bridges follow: Cys-224–Cys-288, Cys-237–Cys-298, Cys-268–Cys-278, Cys-330–Cys-394, Cys-343–Cys-404, and Cys-374–Cys-384. N-linked (GlcNAc...) asparagine glycans are attached at residues Asn-377 and Asn-422. Residues 431-466 are disordered; the sequence is TSVGQMPGPAGPWPPSASPTAPPEPGPEAGSPQLRL. The segment covering 439-456 has biased composition (pro residues); the sequence is PAGPWPPSASPTAPPEPG. The SRCR 4 domain maps to 464 to 565; sequence LRLVAGPSRC…HNEDVGVTCT (102 aa). 3 disulfide bridges follow: Cys-489/Cys-554, Cys-502/Cys-564, and Cys-534/Cys-544. The tract at residues 592–756 is disordered; that stretch reads WLPGELTTKP…AGVPVPSGPF (165 aa). Positions 599–611 are enriched in polar residues; sequence TKPSASLTSSVPQ. Residues 622–633 show a composition bias toward basic residues; that stretch reads KSTKKWVTKNAR. Residues 653 to 663 show a composition bias toward polar residues; that stretch reads TPTSLHPTART. The segment covering 665 to 676 has biased composition (basic and acidic residues); the sequence is ELPKRLTTEAPH. Positions 698–740 are enriched in polar residues; the sequence is PVVSQSTQGPQEVTSEATTTENPQTSLEPSGENTEGSLESSQD. Residues 741–755 are compositionally biased toward low complexity; it reads PATTPTAGVPVPSGP. Residues 758–858 enclose the SRCR 5 domain; sequence VRLADGPNRC…HEEDVVLTCT (101 aa). Disulfide bonds link Cys-783–Cys-847, Cys-796–Cys-857, and Cys-827–Cys-837. Disordered stretches follow at residues 888–1270 and 1351–1371; these read RPGH…PFGP and STPVPMTTTTEEEERPLRGDV. Residues 894–912 are compositionally biased toward polar residues; sequence SWATTTNTEVPSPATQNLP. 3 stretches are compositionally biased toward low complexity: residues 936-957, 981-1004, and 1018-1035; these read KGTPTTTKPGSTVTTSTSKSPG, PTSATTSSPASSSSPEPSGSRQTS, and GTSSSPKPSLLTPGLPSP. Composition is skewed to polar residues over residues 1039 to 1086 and 1102 to 1148; these read ALST…TSEL and SSDS…NPQQ. Residues Asn-1044 and Asn-1131 are each glycosylated (N-linked (GlcNAc...) asparagine). Pro residues predominate over residues 1149 to 1163; it reads PRSPHPATSPQPPTN. Polar residues predominate over residues 1164–1189; the sequence is THPSSTPATPTESLPSSRKTELSSPT. Residues 1218 to 1230 are compositionally biased toward low complexity; the sequence is ASESGPSSPSPAS. The segment covering 1244-1261 has biased composition (polar residues); the sequence is RSQTLHSASDHLTQGPTP.

In terms of assembly, interacts with LGALS1 and laminin. In terms of processing, partially N- and O-glycosylated. Detected throughout the gastrointestinal and genitourinary tracts, in serosal salivary gland, the exocrine part of pancreas and testis, as well as in a few tubular structures in kidney. Not detected in lung and heart (at protein level). Strongly expressed in testis, kidney and pancreas, with lower levels detected in bone marrow, spleen, lung, liver, colon, stomach and skeletal muscle. Very low levels or no expression detected in thymus, esophagus, jejunum, ileum, duodenum, ovary, uterus, heart, trachea, brain, cerebellum and bladder.

The protein resides in the secreted. Its subcellular location is the cytoplasm. Binds to extracellular matrix proteins. Binds to pathogen-associated molecular patterns (PAMPs) present on the cell walls of Gram-positive and Gram-negative bacteria and fungi, behaving as a pattern recognition receptor (PRR). Induces bacterial and fungal aggregation and subsequent inhibition of PAMP-induced cytokine release. Does not possess intrinsic bactericidal activity. May play a role in the innate defense and homeostasis of certain epithelial surfaces. The chain is Soluble scavenger receptor cysteine-rich domain-containing protein SSC5D (Ssc5d) from Mus musculus (Mouse).